We begin with the raw amino-acid sequence, 60 residues long: Large ribosomal subunit protein uL30 (60 aa).

It belongs to the universal ribosomal protein uL30 family. Part of the 50S ribosomal subunit.

The sequence is that of Large ribosomal subunit protein uL30 from Cutibacterium acnes (strain DSM 16379 / KPA171202) (Propionibacterium acnes).